Reading from the N-terminus, the 316-residue chain is Aspartate-semialdehyde dehydrogenase (316 aa).

NADP(+)-binding positions include 13-16 (TGAV) and 41-42 (RS). Residue Arg-101 participates in phosphate binding. Cys-132 functions as the Acyl-thioester intermediate in the catalytic mechanism. Gln-159 lines the substrate pocket. Position 162 to 163 (162 to 163 (SG)) interacts with NADP(+). A phosphate-binding site is contributed by Lys-216. Position 238 (Arg-238) interacts with substrate. Residue His-245 is the Proton acceptor of the active site. Asn-316 is an NADP(+) binding site.

This sequence belongs to the aspartate-semialdehyde dehydrogenase family. As to quaternary structure, homodimer.

It carries out the reaction L-aspartate 4-semialdehyde + phosphate + NADP(+) = 4-phospho-L-aspartate + NADPH + H(+). The protein operates within amino-acid biosynthesis; L-lysine biosynthesis via DAP pathway; (S)-tetrahydrodipicolinate from L-aspartate: step 2/4. It functions in the pathway amino-acid biosynthesis; L-methionine biosynthesis via de novo pathway; L-homoserine from L-aspartate: step 2/3. Its pathway is amino-acid biosynthesis; L-threonine biosynthesis; L-threonine from L-aspartate: step 2/5. Catalyzes the NADPH-dependent formation of L-aspartate-semialdehyde (L-ASA) by the reductive dephosphorylation of L-aspartyl-4-phosphate. In Vibrio mimicus, this protein is Aspartate-semialdehyde dehydrogenase (asd).